Here is a 79-residue protein sequence, read N- to C-terminus: Small ribosomal subunit protein bS16c (79 aa).

This sequence belongs to the bacterial ribosomal protein bS16 family.

Its subcellular location is the plastid. The protein localises to the chloroplast. The sequence is that of Small ribosomal subunit protein bS16c from Staurastrum punctulatum (Green alga).